A 637-amino-acid chain; its full sequence is ATP-dependent zinc metalloprotease FtsH (637 aa).

Topologically, residues 1–6 (MNNQGR) are cytoplasmic. The helical transmembrane segment at 7–27 (SILAWAALFIFVILLFNVFQS) threads the bilayer. Topologically, residues 28 to 103 (DGLLGVRNNI…VVPLETRMNT (76 aa)) are periplasmic. The chain crosses the membrane as a helical span at residues 104-124 (FLGFLISWFPMLLLIGVWVFF). Over 125 to 637 (MRQMHGGGKA…TKAQKENIAS (513 aa)) the chain is Cytoplasmic. 195 to 202 (GPPGTGKT) is an ATP binding site. Residue histidine 417 coordinates Zn(2+). The active site involves glutamate 418. 2 residues coordinate Zn(2+): histidine 421 and aspartate 495. The tract at residues 617 to 637 (DKEKLHEKTKTTKAQKENIAS) is disordered.

In the central section; belongs to the AAA ATPase family. It in the C-terminal section; belongs to the peptidase M41 family. Homohexamer. Requires Zn(2+) as cofactor.

It is found in the cell inner membrane. In terms of biological role, acts as a processive, ATP-dependent zinc metallopeptidase for both cytoplasmic and membrane proteins. Plays a role in the quality control of integral membrane proteins. This Rickettsia typhi (strain ATCC VR-144 / Wilmington) protein is ATP-dependent zinc metalloprotease FtsH.